Here is a 438-residue protein sequence, read N- to C-terminus: Death-associated inhibitor of apoptosis 1 (438 aa).

A BIR 1 repeat occupies 44 to 110 (EETRLKTFTD…QRWSPNCPLL (67 aa)). Positions 194–213 (TATQATGDVQPETCRPSAAS) are disordered. Residues 226 to 293 (ETARLRTFEA…ALWLSQCRFV (68 aa)) form a BIR 2 repeat. The Zn(2+) site is built by C263, C266, H283, and C290. The disordered stretch occupies residues 322–346 (GGVAVASTQASEEEQQTSLSSEEAV). The span at 327–345 (ASTQASEEEQQTSLSSEEA) shows a compositional bias: low complexity. Residues 391 to 426 (CKICYGAEYNTAFLPCGHVVACAKCASSVTKCPLCR) form an RING-type zinc finger.

Belongs to the IAP family. In terms of assembly, interacts (via BIR 2 domain) with Dronc (via residues 114-125). Rpr, hid and grim can outcompete Dronc for binding Diap1 therefore removing Diap1-mediated ubiquitination. Interacts (via BIR 2 domain) with HtrA2; this displaces any bound Dronc. Interacts with Strica. The N-terminally cleaved form interacts with Ubr3 (via UBR-type zinc finger); the interaction promotes the recruitment and uniquitination of substrate capases such as Dronc. Post-translationally, ubiquitinated and degraded by HtrA2 in apoptotic cells; proteolytic cleavage at specific sites in the BIR domain linker region generating inactive fragments. Mutation of one site reduces but does not abolish cleavage as another site is selected by the protease.

It catalyses the reaction S-ubiquitinyl-[E2 ubiquitin-conjugating enzyme]-L-cysteine + [acceptor protein]-L-lysine = [E2 ubiquitin-conjugating enzyme]-L-cysteine + N(6)-ubiquitinyl-[acceptor protein]-L-lysine.. Its function is as follows. Anti-apoptotic protein which functions as a caspase regulator, using its E3 ubiquitin-protein ligase activity to smother caspase activity. Binds, ubiquitinates and inactivates initiator caspase Dronc, and effector caspases Drice and Dcp-1. Acts as a Nedd8-E3 ubiquitin-protein ligase for Drice. Suppresses apoptosis by targeting the apoptosome for ubiquitination and inactivation. Plays an important role in cell motility. Overexpression suppresses rpr and hid-dependent cell death in the eye. Interaction of Diap1 with Dronc is required to suppress Dronc-mediated cell death through Diap1-mediated ubiquitination of Dronc. Acts as a positive regulator of Wnt signaling. In Drosophila melanogaster (Fruit fly), this protein is Death-associated inhibitor of apoptosis 1 (Diap1).